The sequence spans 370 residues: Spermidine/putrescine import ATP-binding protein PotA 1 (370 aa).

The region spanning 12–250 is the ABC transporter domain; it reads VSIRAVRKVY…PGNRFVADFI (239 aa). 48-55 is an ATP binding site; that stretch reads GPSGCGKT.

It belongs to the ABC transporter superfamily. Spermidine/putrescine importer (TC 3.A.1.11.1) family. As to quaternary structure, the complex is composed of two ATP-binding proteins (PotA), two transmembrane proteins (PotB and PotC) and a solute-binding protein (PotD).

It localises to the cell inner membrane. The enzyme catalyses ATP + H2O + polyamine-[polyamine-binding protein]Side 1 = ADP + phosphate + polyamineSide 2 + [polyamine-binding protein]Side 1.. In terms of biological role, part of the ABC transporter complex PotABCD involved in spermidine/putrescine import. Responsible for energy coupling to the transport system. In Pseudomonas aeruginosa (strain ATCC 15692 / DSM 22644 / CIP 104116 / JCM 14847 / LMG 12228 / 1C / PRS 101 / PAO1), this protein is Spermidine/putrescine import ATP-binding protein PotA 1.